Reading from the N-terminus, the 1286-residue chain is X-linked retinitis pigmentosa GTPase regulator-interacting protein 1 (1286 aa).

The interval 144–193 is disordered; the sequence is QVGHRQLHTAGAPVPEKPKRGPRDRLSYTAPPSFKEHATNENRGEVASKP. Basic and acidic residues-rich tracts occupy residues 159-169 and 177-189; these read EKPKRGPRDRL and FKEH…RGEV. A coiled-coil region spans residues 294–584; it reads KAQLTEVQEA…LEGILRSHDL (291 aa). The 126-residue stretch at 781–906 folds into the C2 domain; sequence GGRKAQEEEF…AKNESIKGDF (126 aa). 2 disordered regions span residues 934–1008 and 1058–1108; these read SFLK…RKHG and EEEE…PMSQ. Composition is skewed to basic and acidic residues over residues 940 to 960, 988 to 998, and 1070 to 1084; these read AQTK…EEKA, HGGERKEKEHQ, and KQKE…KESS. Polar residues predominate over residues 1085–1096; sequence EQGSEVSEAQTT. An interaction with RPGR region spans residues 1091 to 1281; the sequence is SEAQTTDSDD…VLHAIYKEMT (191 aa).

This sequence belongs to the RPGRIP1 family. In terms of assembly, forms homodimers and elongated homopolymers. Interacts with RPGR. Interacts with NPHP4. Interacts with NEK4. Interacts with SPATA7. Interacts with CEP290/NPHP6; mediating the association between RPGR and CEP290/NPHP6. Strong expression in retina, with weaker expression in testis. Expressed in other neurons such as amacrine cells. Colocalizes with RGPR in the outer segment of rod photoreceptors and cone outer segments.

Its subcellular location is the cell projection. It is found in the cilium. Functionally, may function as scaffolding protein. Required for normal location of RPGR at the connecting cilium of photoreceptor cells. Required for normal disk morphogenesis and disk organization in the outer segment of photoreceptor cells and for survival of photoreceptor cells. The protein is X-linked retinitis pigmentosa GTPase regulator-interacting protein 1 (RPGRIP1) of Homo sapiens (Human).